Consider the following 429-residue polypeptide: Light-independent protochlorophyllide reductase subunit N (429 aa).

C32, C57, and C118 together coordinate [4Fe-4S] cluster.

It belongs to the BchN/ChlN family. In terms of assembly, protochlorophyllide reductase is composed of three subunits; BchL, BchN and BchB. Forms a heterotetramer of two BchB and two BchN subunits. Requires [4Fe-4S] cluster as cofactor.

The enzyme catalyses chlorophyllide a + oxidized 2[4Fe-4S]-[ferredoxin] + 2 ADP + 2 phosphate = protochlorophyllide a + reduced 2[4Fe-4S]-[ferredoxin] + 2 ATP + 2 H2O. It participates in porphyrin-containing compound metabolism; bacteriochlorophyll biosynthesis (light-independent). Its function is as follows. Component of the dark-operative protochlorophyllide reductase (DPOR) that uses Mg-ATP and reduced ferredoxin to reduce ring D of protochlorophyllide (Pchlide) to form chlorophyllide a (Chlide). This reaction is light-independent. The NB-protein (BchN-BchB) is the catalytic component of the complex. This is Light-independent protochlorophyllide reductase subunit N from Rhodopseudomonas palustris (strain TIE-1).